We begin with the raw amino-acid sequence, 212 residues long: Small ribosomal subunit protein uS5 (212 aa).

The S5 DRBM domain maps to 48-111 (LEDEVLDINM…DIAKLNIIDV (64 aa)).

The protein belongs to the universal ribosomal protein uS5 family. As to quaternary structure, part of the 30S ribosomal subunit. Contacts protein S4.

Functionally, with S4 and S12 plays an important role in translational accuracy. This Haloarcula marismortui (strain ATCC 43049 / DSM 3752 / JCM 8966 / VKM B-1809) (Halobacterium marismortui) protein is Small ribosomal subunit protein uS5.